A 682-amino-acid polypeptide reads, in one-letter code: Potassium-transporting ATPase ATP-binding subunit (682 aa).

The next 4 helical transmembrane spans lie at 34–54 (PVMFIVWIGSLLTTCISIAMA), 62–82 (ALFSAAISGWLWVTVLFANFA), 219–239 (IALTILLIALTIVFLLATATL), and 254–274 (VLVALLVCLIPTTIGGLLSAI). Residue Asp-307 is the 4-aspartylphosphate intermediate of the active site. ATP-binding positions include Asp-344, Glu-348, 377–384 (FTAQSRMS), and Lys-395. 2 residues coordinate Mg(2+): Asp-518 and Asp-522. 3 consecutive transmembrane segments (helical) span residues 588-608 (FAIIPAAFAATYPQLNALNIM), 616-636 (AILSAVIFNALIIVFLIPLAL), and 656-676 (IYGLGGLLVPFIGIKVIDLLL).

This sequence belongs to the cation transport ATPase (P-type) (TC 3.A.3) family. Type IA subfamily. As to quaternary structure, the system is composed of three essential subunits: KdpA, KdpB and KdpC.

The protein resides in the cell inner membrane. It carries out the reaction K(+)(out) + ATP + H2O = K(+)(in) + ADP + phosphate + H(+). In terms of biological role, part of the high-affinity ATP-driven potassium transport (or Kdp) system, which catalyzes the hydrolysis of ATP coupled with the electrogenic transport of potassium into the cytoplasm. This subunit is responsible for energy coupling to the transport system and for the release of the potassium ions to the cytoplasm. The polypeptide is Potassium-transporting ATPase ATP-binding subunit (Escherichia coli O6:K15:H31 (strain 536 / UPEC)).